Here is a 538-residue protein sequence, read N- to C-terminus: Zinc finger protein 155 (538 aa).

The KRAB domain maps to 8–78; that stretch reads VTFKDVAVVF…GTATQREGNS (71 aa). 11 C2H2-type zinc fingers span residues 176 to 198, 204 to 226, 232 to 254, 260 to 282, 288 to 310, 316 to 338, 344 to 366, 372 to 394, 400 to 422, 428 to 450, and 456 to 478; these read YTCD…QRVH, FMCD…QRVH, FKCE…RKLH, YICE…KRIH, FKCD…SMVH, FRCD…CMVH, YRCE…QVVH, YNCK…QRVH, FKCE…QRSH, YKCE…QRVH, and YNCK…KRLH. Residues 484–506 form a C2H2-type 12; degenerate zinc finger; that stretch reads FKCEDCGKRLVHRTYRKDQPRDY.

It belongs to the krueppel C2H2-type zinc-finger protein family.

The protein localises to the nucleus. May be involved in transcriptional regulation. This chain is Zinc finger protein 155 (ZNF155), found in Homo sapiens (Human).